Reading from the N-terminus, the 178-residue chain is Actin-related protein 2/3 complex subunit 3-A (178 aa).

It belongs to the ARPC3 family. Component of the Arp2/3 complex composed of actr2/arp2, actr3/arp3, arpc1 (arpc1a or arpc1b), arpc2, arpc3, arpc4 and arpc5.

It is found in the cytoplasm. The protein localises to the cytoskeleton. The protein resides in the cell projection. Its subcellular location is the nucleus. Component of the Arp2/3 complex, a multiprotein complex that mediates actin polymerization upon stimulation by nucleation-promoting factor (NPF). The Arp2/3 complex mediates the formation of branched actin networks in the cytoplasm, providing the force for cell motility. In addition to its role in the cytoplasmic cytoskeleton, the Arp2/3 complex also promotes actin polymerization in the nucleus, thereby regulating gene transcription and repair of damaged DNA. The Arp2/3 complex promotes homologous recombination (HR) repair in response to DNA damage by promoting nuclear actin polymerization, leading to drive motility of double-strand breaks (DSBs). The protein is Actin-related protein 2/3 complex subunit 3-A (arpc3-a) of Xenopus laevis (African clawed frog).